We begin with the raw amino-acid sequence, 82 residues long: ATP synthase subunit c, chloroplastic (82 aa).

The next 2 membrane-spanning stretches (helical) occupy residues Ala-7–Gly-27 and Leu-57–Ala-77.

Belongs to the ATPase C chain family. F-type ATPases have 2 components, F(1) - the catalytic core - and F(0) - the membrane proton channel. F(1) has five subunits: alpha(3), beta(3), gamma(1), delta(1), epsilon(1). F(0) has four main subunits: a(1), b(1), b'(1) and c(10-14). The alpha and beta chains form an alternating ring which encloses part of the gamma chain. F(1) is attached to F(0) by a central stalk formed by the gamma and epsilon chains, while a peripheral stalk is formed by the delta, b and b' chains.

It localises to the plastid. The protein localises to the chloroplast thylakoid membrane. In terms of biological role, f(1)F(0) ATP synthase produces ATP from ADP in the presence of a proton or sodium gradient. F-type ATPases consist of two structural domains, F(1) containing the extramembraneous catalytic core and F(0) containing the membrane proton channel, linked together by a central stalk and a peripheral stalk. During catalysis, ATP synthesis in the catalytic domain of F(1) is coupled via a rotary mechanism of the central stalk subunits to proton translocation. Key component of the F(0) channel; it plays a direct role in translocation across the membrane. A homomeric c-ring of between 10-14 subunits forms the central stalk rotor element with the F(1) delta and epsilon subunits. This is ATP synthase subunit c, chloroplastic from Porphyra purpurea (Red seaweed).